The sequence spans 907 residues: Phototropin-2 (907 aa).

The segment at 28-84 is disordered; the sequence is ATAGLEIVAEDAPSGSSGAHQQQAWRPVAPATAGRDSGGTGSGKSSVDGGVGRASHD. Polar residues predominate over residues 41 to 51; the sequence is SGSSGAHQQQA. Residues 89–162 enclose the PAS 1 domain; that stretch reads VSQELKDALS…AKIRDAVKHG (74 aa). Residues 138-143, R156, N171, N181, and Q202 contribute to the FMN site; that span reads NCRFLQ. Position 139 is an S-4a-FMN cysteine (C139). Residues 163-217 form the PAC 1 domain; that stretch reads RSFCGRLLNYRKDGAPFWNLLTVTPIRDDNGKVIKFIGMQVEVSKYTEGLSDKRM. The interval 332 to 363 is disordered; it reads RSSVGSREAPAVVEEPAPAPPPAPEVVERTDS. The PAS 2 domain maps to 375 to 448; that stretch reads QGIDLATTLE…DKIREAIREQ (74 aa). FMN is bound by residues 424–429, R442, N457, N467, and Q488; that span reads NCRFLQ. At C425 the chain carries S-4a-FMN cysteine. One can recognise a PAC 2 domain in the interval 449–503; it reads KEITVQLINYTKSGKKFWNLFHLQPMRDQKGELQYFIGVQLDGSDHVEPLRNRLS. In terms of domain architecture, Protein kinase spans 576–863; the sequence is FKPVKPLGCG…ANDIKQHSFF (288 aa). ATP-binding positions include 582–590 and K605; that span reads LGCGDTGSV. Residue D701 is the Proton acceptor of the active site.

This sequence belongs to the protein kinase superfamily. Ser/Thr protein kinase family. In terms of assembly, homodimer. It depends on FMN as a cofactor. Post-translationally, autophosphorylated in response to blue light irradiation. 2 molecules of FMN bind covalently to cysteines after exposure to blue light and are reversed in the dark. In terms of tissue distribution, expressed at low levels in leaves of dark-grown seedlings.

It carries out the reaction L-seryl-[protein] + ATP = O-phospho-L-seryl-[protein] + ADP + H(+). The enzyme catalyses L-threonyl-[protein] + ATP = O-phospho-L-threonyl-[protein] + ADP + H(+). In terms of biological role, protein kinase that acts as a blue light photoreceptor in a signal-transduction pathway for phototropic responses. Regulates a wide range of physiological activities in plants that maximize the efficiency of photosynthesis, such as chloroplast relocations, stomata opening, and leaf expansion. This is Phototropin-2 (PHOT2) from Oryza sativa subsp. japonica (Rice).